The following is an 821-amino-acid chain: V-type proton ATPase subunit a3 (821 aa).

Alanine 2 carries the post-translational modification N-acetylalanine. Residues 2–421 are Cytoplasmic-facing; sequence AESGGGGGCC…ANPGVFTIVT (420 aa). Positions 97 to 144 form a coiled coil; sequence KENDIDLDDVEVKLGELEAELVEINANNDKLQRSYNELMEYKLVLQKA. Position 174 is a phosphoserine (serine 174). The chain crosses the membrane as a helical span at residues 422-442; it reads FPFLFAVMFGDWGHGICILLA. At 443-469 the chain is on the vacuolar side; it reads TMYLILKEKKLASQKLGDIMEMAFGGR. Residues 470 to 490 traverse the membrane as a helical segment; the sequence is YVILMMSLFSIYTGLIYNEFF. The Cytoplasmic segment spans residues 491-548; sequence SIPFPLFAPSAYDCRDVSCSEATTIGLIKVRDTYPFGLDPVWHGSRSELPFLNSLKMK. Residues 549–569 traverse the membrane as a helical segment; sequence MSILLGVSQMNLGIIMSYFNA. Over 570-581 the chain is Vacuolar; sequence RFFKSSVNIWFQ. Residues 582 to 602 form a helical membrane-spanning segment; that stretch reads FIPQMIFLNSLFGYLSVLIII. Over 603 to 640 the chain is Cytoplasmic; the sequence is KWCTGSQADLYHVMIYMFLSPMDELGENQLFPHQKTLQ. Residues 641-661 form a helical membrane-spanning segment; sequence LVLLFLALVSVPCMLLPKPFI. Topologically, residues 662-758 are vacuolar; it reads LKKQHEARHQ…LLLAWGYNNP (97 aa). The chain crosses the membrane as a helical span at residues 759–779; the sequence is LILIVGVLVFIFATVGVLLVM. Topologically, residues 780-821 are cytoplasmic; sequence ETLSAFLHALRLHWVEFQNKFYEGDGYKFAPFTFIFTANEDE.

This sequence belongs to the V-ATPase 116 kDa subunit family. V-ATPase is a heteromultimeric enzyme composed of a peripheral catalytic V1 complex (components A to H) attached to an integral membrane V0 proton pore complex (components: a, c, c'', d and e). In terms of tissue distribution, expressed in etiolated seedlings hypocotyls.

The protein resides in the vacuole membrane. In terms of biological role, essential component of the vacuolar proton pump (V-ATPase), a multimeric enzyme that catalyzes the translocation of protons across the membranes. Required for assembly and activity of the V-ATPase. Involved in vacuolar nutrient storage (e.g. accumulation and storage of nitrate) and in tolerance to some toxic ions (e.g. zinc ions sequestration in vacuoles). This is V-type proton ATPase subunit a3 (VHA-a3) from Arabidopsis thaliana (Mouse-ear cress).